Consider the following 283-residue polypeptide: Lysozyme-like protein 7 (283 aa).

The N-terminal stretch at 1-18 (MAHKSIVIFSVLAVLCHS) is a signal peptide. Positions 53–273 (YAYALDIYVQ…AVEEDGKIYA (221 aa)) constitute a Ch-type lysozyme domain.

This sequence belongs to the glycosyl hydrolase 25 family. As to expression, expressed in intestine. Expressed in rectal gland cells and head neurons.

Plays a role in resistance to Gram-positive bacteria B.thuringiensis and M.nematophilum and Gram-negative bacteria S.boydii or S.flexneri infection and to fungus C.neoformans infection. Plays a role in susceptibility to Gram-negative bacterium S.typhimurium infection. The chain is Lysozyme-like protein 7 from Caenorhabditis elegans.